Here is a 360-residue protein sequence, read N- to C-terminus: Uroporphyrinogen decarboxylase (360 aa).

Residues 31 to 35 (RQAGR), Asp81, Tyr157, Thr212, and His333 each bind substrate.

It belongs to the uroporphyrinogen decarboxylase family. Homodimer.

Its subcellular location is the cytoplasm. The enzyme catalyses uroporphyrinogen III + 4 H(+) = coproporphyrinogen III + 4 CO2. It participates in porphyrin-containing compound metabolism; protoporphyrin-IX biosynthesis; coproporphyrinogen-III from 5-aminolevulinate: step 4/4. In terms of biological role, catalyzes the decarboxylation of four acetate groups of uroporphyrinogen-III to yield coproporphyrinogen-III. This Herminiimonas arsenicoxydans protein is Uroporphyrinogen decarboxylase.